Consider the following 285-residue polypeptide: Nucleotide-binding protein Pnap_0906 (285 aa).

8–15 (GMSGSGKS) lines the ATP pocket. 57–60 (DVRS) is a binding site for GTP.

The protein belongs to the RapZ-like family.

Functionally, displays ATPase and GTPase activities. The sequence is that of Nucleotide-binding protein Pnap_0906 from Polaromonas naphthalenivorans (strain CJ2).